Here is a 209-residue protein sequence, read N- to C-terminus: Redox-sensing transcriptional repressor Rex (209 aa).

Positions 16–55 form a DNA-binding region, H-T-H motif; the sequence is LYYRFIQNLSLSGKQRVSSAELSEAVKVDSATIRRDFSYF. 90-95 contacts NAD(+); that stretch reads GVGNLG.

This sequence belongs to the transcriptional regulatory Rex family. As to quaternary structure, homodimer.

The protein resides in the cytoplasm. Modulates transcription in response to changes in cellular NADH/NAD(+) redox state. The sequence is that of Redox-sensing transcriptional repressor Rex from Bacillus cereus (strain AH187).